A 146-amino-acid chain; its full sequence is Large ribosomal subunit protein bL17 (146 aa).

The segment at 118 to 146 (RDPAAKGQDSGPKPEVASDEDEAGEAAAA) is disordered. The span at 134–146 (ASDEDEAGEAAAA) shows a compositional bias: acidic residues.

This sequence belongs to the bacterial ribosomal protein bL17 family. As to quaternary structure, part of the 50S ribosomal subunit. Contacts protein L32.

The polypeptide is Large ribosomal subunit protein bL17 (Acidiphilium cryptum (strain JF-5)).